Reading from the N-terminus, the 386-residue chain is Putative 8-amino-7-oxononanoate synthase 2 (386 aa).

Arginine 21 serves as a coordination point for substrate. Residue glycine 104–tyrosine 105 participates in pyridoxal 5'-phosphate binding. Histidine 129 is a substrate binding site. Pyridoxal 5'-phosphate contacts are provided by residues serine 176, aspartate 201–histidine 204, and threonine 230–lysine 233. Lysine 233 is subject to N6-(pyridoxal phosphate)lysine.

The protein belongs to the class-II pyridoxal-phosphate-dependent aminotransferase family. BioF subfamily. In terms of assembly, homodimer. Pyridoxal 5'-phosphate serves as cofactor.

The enzyme catalyses 6-carboxyhexanoyl-[ACP] + L-alanine + H(+) = (8S)-8-amino-7-oxononanoate + holo-[ACP] + CO2. It functions in the pathway cofactor biosynthesis; biotin biosynthesis. In terms of biological role, catalyzes the decarboxylative condensation of pimeloyl-[acyl-carrier protein] and L-alanine to produce 8-amino-7-oxononanoate (AON), [acyl-carrier protein], and carbon dioxide. The chain is Putative 8-amino-7-oxononanoate synthase 2 (bioF) from Bacillus velezensis (strain DSM 23117 / BGSC 10A6 / LMG 26770 / FZB42) (Bacillus amyloliquefaciens subsp. plantarum).